The chain runs to 123 residues: Plasminogen (123 aa).

One can recognise a Kringle domain in the interval 40–118; the sequence is DCYHGNGQSY…RWEFCNLKKC (79 aa). 3 disulfides stabilise this stretch: Cys-41-Cys-118, Cys-62-Cys-101, and Cys-90-Cys-113.

It belongs to the peptidase S1 family. Plasminogen subfamily. Interacts with CSPG4 and AMOT. Interacts (via the Kringle domains) with HRG; the interaction tethers PLG to the cell surface and enhances its activation. Interacts (via Kringle 4 domain) with ADA; the interaction stimulates PLG activation when in complex with DPP4. Angiostatin: Interacts with ATP5F1A; the interaction inhibits most of the angiogenic effects of angiostatin.

It localises to the secreted. It catalyses the reaction Preferential cleavage: Lys-|-Xaa &gt; Arg-|-Xaa, higher selectivity than trypsin. Converts fibrin into soluble products.. Converted into plasmin by plasminogen activators, both plasminogen and its activator being bound to fibrin. Cannot be activated with streptokinase. Its function is as follows. Plasmin dissolves the fibrin of blood clots and acts as a proteolytic factor in a variety of other processes including embryonic development, tissue remodeling, tumor invasion, and inflammation. In ovulation, weakens the walls of the Graafian follicle. It activates the urokinase-type plasminogen activator, collagenases and several complement zymogens, such as C1, C4 and C5. Cleavage of fibronectin and laminin leads to cell detachment and apoptosis. Also cleaves fibrin, thrombospondin and von Willebrand factor. Its role in tissue remodeling and tumor invasion may be modulated by CSPG4. Binds to cells. This chain is Plasminogen (PLG), found in Capra hircus (Goat).